The primary structure comprises 90 residues: MENIQLINIGFGNIVSANRVIAIVSPESAPIKRIITDARERGQLIDATYGRRTRAVIITDSSHVVLSAIQPETVAHRFVVNKETATINSN.

The protein belongs to the RemA family.

This is Putative regulatory protein cce_4590 from Crocosphaera subtropica (strain ATCC 51142 / BH68) (Cyanothece sp. (strain ATCC 51142)).